The following is a 438-amino-acid chain: GTPase Der (438 aa).

2 EngA-type G domains span residues 4–168 (PIVA…KNEG) and 177–352 (IKIA…DNYC). Residues 10–17 (GRPNVGKS), 57–61 (DTGGI), 120–123 (NKID), 183–190 (GKPNVGKS), 230–234 (DTAGV), and 295–298 (NKWD) each bind GTP. Residues 353–437 (KQIKTGILND…GIKLEFRERK (85 aa)) enclose the KH-like domain.

The protein belongs to the TRAFAC class TrmE-Era-EngA-EngB-Septin-like GTPase superfamily. EngA (Der) GTPase family. In terms of assembly, associates with the 50S ribosomal subunit.

In terms of biological role, GTPase that plays an essential role in the late steps of ribosome biogenesis. In Clostridium kluyveri (strain NBRC 12016), this protein is GTPase Der.